Here is a 635-residue protein sequence, read N- to C-terminus: Threonine--tRNA ligase (635 aa).

Positions 1-144 are editing domain; that stretch reads MQLLLIHSDY…RTIRLEGAVP (144 aa). Positions 215 to 514 are catalytic; the sequence is PHVELMRRLE…AEEGKVPNLP (300 aa). Residues Cys307, His359, and His483 each coordinate Zn(2+).

This sequence belongs to the class-II aminoacyl-tRNA synthetase family. Homodimer. Zn(2+) is required as a cofactor.

Its subcellular location is the cytoplasm. The catalysed reaction is tRNA(Thr) + L-threonine + ATP = L-threonyl-tRNA(Thr) + AMP + diphosphate + H(+). Catalyzes the attachment of threonine to tRNA(Thr) in a two-step reaction: L-threonine is first activated by ATP to form Thr-AMP and then transferred to the acceptor end of tRNA(Thr). Also edits incorrectly charged L-seryl-tRNA(Thr). This chain is Threonine--tRNA ligase, found in Methanococcoides burtonii (strain DSM 6242 / NBRC 107633 / OCM 468 / ACE-M).